We begin with the raw amino-acid sequence, 261 residues long: RNA-binding protein 1 (261 aa).

2 disordered regions span residues 1-38 and 232-261; these read MADG…SGNE and QFSR…RGRR. An RRM domain is found at 151 to 236; that stretch reads PTLYIEGLPS…SHLRLQFSRY (86 aa). Residues 240 to 254 show a composition bias toward gly residues; sequence RSGGGPRSSGPPRGG.

Ubiquitous.

The protein resides in the nucleus speckle. It localises to the cytoplasmic granule. Functionally, RNA-binding protein interacting with the enod40 RNA. This chain is RNA-binding protein 1, found in Medicago truncatula (Barrel medic).